The following is a 367-amino-acid chain: GTP cyclohydrolase FolE2 (367 aa).

Belongs to the GTP cyclohydrolase IV family.

It carries out the reaction GTP + H2O = 7,8-dihydroneopterin 3'-triphosphate + formate + H(+). It functions in the pathway cofactor biosynthesis; 7,8-dihydroneopterin triphosphate biosynthesis; 7,8-dihydroneopterin triphosphate from GTP: step 1/1. Its function is as follows. Converts GTP to 7,8-dihydroneopterin triphosphate. The protein is GTP cyclohydrolase FolE2 of Ruegeria pomeroyi (strain ATCC 700808 / DSM 15171 / DSS-3) (Silicibacter pomeroyi).